Consider the following 274-residue polypeptide: NH(3)-dependent NAD(+) synthetase (274 aa).

An ATP-binding site is contributed by glycine 46–serine 53. Residue aspartate 52 coordinates Mg(2+). A deamido-NAD(+)-binding site is contributed by arginine 140. ATP is bound at residue threonine 160. Residue glutamate 165 participates in Mg(2+) binding. The deamido-NAD(+) site is built by lysine 173 and aspartate 180. Residues lysine 189 and threonine 211 each coordinate ATP. Residue histidine 260–lysine 261 coordinates deamido-NAD(+).

It belongs to the NAD synthetase family. In terms of assembly, homodimer.

The catalysed reaction is deamido-NAD(+) + NH4(+) + ATP = AMP + diphosphate + NAD(+) + H(+). It participates in cofactor biosynthesis; NAD(+) biosynthesis; NAD(+) from deamido-NAD(+) (ammonia route): step 1/1. Functionally, catalyzes the ATP-dependent amidation of deamido-NAD to form NAD. Uses ammonia as a nitrogen source. The sequence is that of NH(3)-dependent NAD(+) synthetase from Sodalis glossinidius (strain morsitans).